A 331-amino-acid chain; its full sequence is Tryptophan--tRNA ligase 1 (331 aa).

Residues 9–11 (KPT) and 17–18 (GN) each bind ATP. A 'HIGH' region motif is present at residues 10 to 18 (PTGHLTLGN). D137 contacts L-tryptophan. Residues 149–151 (GDD), V188, and 197–201 (KMGKS) each bind ATP. Positions 197 to 201 (KMGKS) match the 'KMSKS' region motif.

It belongs to the class-I aminoacyl-tRNA synthetase family. Homodimer.

The protein localises to the cytoplasm. The catalysed reaction is tRNA(Trp) + L-tryptophan + ATP = L-tryptophyl-tRNA(Trp) + AMP + diphosphate + H(+). Catalyzes the attachment of tryptophan to tRNA(Trp). This Streptomyces avermitilis (strain ATCC 31267 / DSM 46492 / JCM 5070 / NBRC 14893 / NCIMB 12804 / NRRL 8165 / MA-4680) protein is Tryptophan--tRNA ligase 1.